Here is a 275-residue protein sequence, read N- to C-terminus: 3-methyl-2-oxobutanoate hydroxymethyltransferase (275 aa).

2 residues coordinate Mg(2+): Asp55 and Asp94. Residues 55–56, Asp94, and Lys123 each bind 3-methyl-2-oxobutanoate; that span reads DS. Residue Glu125 coordinates Mg(2+). The active-site Proton acceptor is Glu192.

The protein belongs to the PanB family. In terms of assembly, homodecamer; pentamer of dimers. Mg(2+) serves as cofactor.

It is found in the cytoplasm. The enzyme catalyses 3-methyl-2-oxobutanoate + (6R)-5,10-methylene-5,6,7,8-tetrahydrofolate + H2O = 2-dehydropantoate + (6S)-5,6,7,8-tetrahydrofolate. It participates in cofactor biosynthesis; (R)-pantothenate biosynthesis; (R)-pantoate from 3-methyl-2-oxobutanoate: step 1/2. In terms of biological role, catalyzes the reversible reaction in which hydroxymethyl group from 5,10-methylenetetrahydrofolate is transferred onto alpha-ketoisovalerate to form ketopantoate. This chain is 3-methyl-2-oxobutanoate hydroxymethyltransferase, found in Halorhodospira halophila (strain DSM 244 / SL1) (Ectothiorhodospira halophila (strain DSM 244 / SL1)).